We begin with the raw amino-acid sequence, 204 residues long: LexA repressor (204 aa).

A DNA-binding region (H-T-H motif) is located at residues 27 to 47 (VREIGEAVGLASSSTVHGHLA). Residues serine 126 and lysine 164 each act as for autocatalytic cleavage activity in the active site.

This sequence belongs to the peptidase S24 family. Homodimer.

It carries out the reaction Hydrolysis of Ala-|-Gly bond in repressor LexA.. Its function is as follows. Represses a number of genes involved in the response to DNA damage (SOS response), including recA and lexA. In the presence of single-stranded DNA, RecA interacts with LexA causing an autocatalytic cleavage which disrupts the DNA-binding part of LexA, leading to derepression of the SOS regulon and eventually DNA repair. This Listeria innocua serovar 6a (strain ATCC BAA-680 / CLIP 11262) protein is LexA repressor.